A 693-amino-acid polypeptide reads, in one-letter code: Polyribonucleotide nucleotidyltransferase (693 aa).

The Mg(2+) site is built by aspartate 486 and aspartate 492. The region spanning 553 to 612 is the KH domain; that stretch reads PRFSSMRIDTEKIKDVIGKGGATIRSITEQTGTTIEIEDDGSVKIAATDKAAAANARRLI. Residues 622-690 form the S1 motif domain; sequence GRIYDAKVTK…RQGRVRLSIK (69 aa).

This sequence belongs to the polyribonucleotide nucleotidyltransferase family. In terms of assembly, component of the RNA degradosome, which is a multiprotein complex involved in RNA processing and mRNA degradation. The cofactor is Mg(2+).

Its subcellular location is the cytoplasm. The enzyme catalyses RNA(n+1) + phosphate = RNA(n) + a ribonucleoside 5'-diphosphate. Functionally, involved in mRNA degradation. Catalyzes the phosphorolysis of single-stranded polyribonucleotides processively in the 3'- to 5'-direction. The chain is Polyribonucleotide nucleotidyltransferase from Dichelobacter nodosus (strain VCS1703A).